The following is a 186-amino-acid chain: UPF0301 protein Tgr7_2910 (186 aa).

Belongs to the UPF0301 (AlgH) family.

The chain is UPF0301 protein Tgr7_2910 from Thioalkalivibrio sulfidiphilus (strain HL-EbGR7).